The following is a 294-amino-acid chain: UDP-3-O-acyl-N-acetylglucosamine deacetylase (294 aa).

H75, H232, and D236 together coordinate Zn(2+). H259 functions as the Proton donor in the catalytic mechanism.

Belongs to the LpxC family. The cofactor is Zn(2+).

It catalyses the reaction a UDP-3-O-[(3R)-3-hydroxyacyl]-N-acetyl-alpha-D-glucosamine + H2O = a UDP-3-O-[(3R)-3-hydroxyacyl]-alpha-D-glucosamine + acetate. It participates in glycolipid biosynthesis; lipid IV(A) biosynthesis; lipid IV(A) from (3R)-3-hydroxytetradecanoyl-[acyl-carrier-protein] and UDP-N-acetyl-alpha-D-glucosamine: step 2/6. Catalyzes the hydrolysis of UDP-3-O-myristoyl-N-acetylglucosamine to form UDP-3-O-myristoylglucosamine and acetate, the committed step in lipid A biosynthesis. The chain is UDP-3-O-acyl-N-acetylglucosamine deacetylase from Campylobacter curvus (strain 525.92).